The sequence spans 74 residues: Probable molt-inhibiting hormone (74 aa).

3 disulfides stabilise this stretch: C6-C43, C23-C39, and C26-C52. Residue A74 is modified to Alanine amide.

Its subcellular location is the secreted. Functionally, inhibits Y-organs where molting hormone (ecdysteroid) is secreted. A molting cycle is initiated when MIH secretion diminishes or stops. Has little or no hyperglycemic activity. This Jasus lalandii (Cape rock lobster) protein is Probable molt-inhibiting hormone.